The primary structure comprises 364 residues: Palmitoyltransferase ZDHHC9 (364 aa).

At methionine 1 to lysine 35 the chain is on the cytoplasmic side. A helical membrane pass occupies residues glycine 36–glutamate 56. Topologically, residues cysteine 57–glutamine 63 are lumenal. A helical transmembrane segment spans residues glutamine 64–leucine 84. The Cytoplasmic segment spans residues arginine 85–tyrosine 183. The 51-residue stretch at lysine 139–leucine 189 folds into the DHHC domain. The active-site S-palmitoyl cysteine intermediate is the cysteine 169. The helical transmembrane segment at phenylalanine 184–valine 204 threads the bilayer. The Lumenal segment spans residues tyrosine 205–glutamate 228. Residues valine 229–leucine 249 form a helical membrane-spanning segment. The Cytoplasmic segment spans residues valine 250–lysine 364. The segment at proline 303–lysine 364 is disordered. Residues arginine 310–proline 323 are compositionally biased toward polar residues. Residues glutamate 346–proline 356 show a composition bias toward pro residues.

This sequence belongs to the DHHC palmitoyltransferase family. ERF2/ZDHHC9 subfamily. Interacts with GOLGA7.

The protein resides in the endoplasmic reticulum membrane. Its subcellular location is the golgi apparatus membrane. It catalyses the reaction L-cysteinyl-[protein] + hexadecanoyl-CoA = S-hexadecanoyl-L-cysteinyl-[protein] + CoA. Its function is as follows. Palmitoyltransferase that catalyzes the addition of palmitate onto various protein substrates, such as ADRB2, GSDMD, HRAS, NRAS and CGAS. The ZDHHC9-GOLGA7 complex is a palmitoyltransferase specific for HRAS and NRAS. May have a palmitoyltransferase activity toward the beta-2 adrenergic receptor/ADRB2 and therefore regulate G protein-coupled receptor signaling. Acts as a regulator of innate immunity by catalyzing palmitoylation of CGAS, thereby promoting CGAS homodimerization and cyclic GMP-AMP synthase activity. Activates pyroptosis by catalyzing palmitoylation of gasdermin-D (GSDMD), thereby promoting membrane translocation and pore formation of GSDMD. The sequence is that of Palmitoyltransferase ZDHHC9 (ZDHHC9) from Pongo abelii (Sumatran orangutan).